The primary structure comprises 177 residues: Large ribosomal subunit protein uL6 (177 aa).

Belongs to the universal ribosomal protein uL6 family. In terms of assembly, part of the 50S ribosomal subunit.

This protein binds to the 23S rRNA, and is important in its secondary structure. It is located near the subunit interface in the base of the L7/L12 stalk, and near the tRNA binding site of the peptidyltransferase center. The chain is Large ribosomal subunit protein uL6 from Polynucleobacter asymbioticus (strain DSM 18221 / CIP 109841 / QLW-P1DMWA-1) (Polynucleobacter necessarius subsp. asymbioticus).